Consider the following 369-residue polypeptide: RAB6-interacting golgin (369 aa).

The tract at residues 1 to 128 (MAQGWAGFSE…HNNVEILPPK (128 aa)) is disordered. Residues 11 to 27 (EELRRLKQTKDPFEPQR) are compositionally biased toward basic and acidic residues. Composition is skewed to polar residues over residues 46–61 (EQSQ…TSLL) and 82–93 (SPTLPSHFTLTS). Residues 106-120 (QPKELGLENSHDGHN) are compositionally biased toward basic and acidic residues. A coiled-coil region spans residues 145 to 297 (RWEVLQQEQR…EVERLLHEQE (153 aa)). The necessary for interaction with RCHY1 stretch occupies residues 188-369 (IQKELQALDD…GNDISAALAT (182 aa)). The segment at 334-369 (VSPKVDDQCGNSSSIPFLSPNCPNQEGNDISAALAT) is disordered. Positions 342-361 (CGNSSSIPFLSPNCPNQEGN) are enriched in polar residues.

The protein belongs to the GORAB family. As to quaternary structure, interacts with SCYL1. Interacts with RCHY1 and RAB6A/RAB6.

It is found in the cytoplasm. The protein localises to the golgi apparatus. The polypeptide is RAB6-interacting golgin (GORAB) (Homo sapiens (Human)).